The sequence spans 534 residues: Serine/threonine-protein kinase NLK (534 aa).

2 sufficient for interaction with DAPK3 regions span residues leucine 8–histidine 132 and histidine 131–isoleucine 423. 2 required for interaction with TAB2 regions span residues leucine 8 to glutamine 311 and tyrosine 441 to glutamate 534. Disordered stretches follow at residues alanine 29 to alanine 79 and glutamine 97 to proline 147. Positions glycine 33–histidine 61 are enriched in basic residues. Residues proline 110–alanine 126 are compositionally biased toward low complexity. Residues lysine 129 to histidine 138 are compositionally biased toward basic residues. Residues isoleucine 145 to leucine 434 form the Protein kinase domain. ATP contacts are provided by residues isoleucine 151–valine 159 and lysine 174. Aspartate 271 (proton acceptor) is an active-site residue. Threonine 305 bears the Phosphothreonine; by autocatalysis mark. Positions threonine 305–glutamate 307 match the TQE motif. The segment at aspartate 435–glutamate 534 is required for homodimerization and kinase activation and localization to the nucleus. At serine 529 the chain carries Phosphoserine.

This sequence belongs to the protein kinase superfamily. CMGC Ser/Thr protein kinase family. MAP kinase subfamily. In terms of assembly, homodimer. Homodimerization is required for intermolecular autophosphorylation, kinase activation and nuclear localization. May interact with components of cullin-RING-based SCF (SKP1-CUL1-F-box protein) E3 ubiquitin-protein ligase complexes. Interacts with LEF1, MEF2A, MYBL1 and MYBL2. Interacts with the upstream activating kinases HIPK2 and MAP3K7/TAK1. Interaction with MAP3K7/TAK1 seems to be indirect, and may be mediated by other proteins such as STAT3, TAB1 and TAB2. Interacts with and phosphorylates a number of transcription factors including FOXO1, FOXO3, FOXO4, MYB, NOTCH1 and TCF7L2/TCF4. Interacts with DAPK3/ZIPK, and this interaction may disrupt interaction with transcription factors such as TCF7L2/TCF4. Forms a transcriptional repressor complex with CHD7, PPARG and SETDB1. Interacts with RNF138/NARF. Interacts with ATF5; the interaction stabilizes ATF5 at the protein level in a kinase-independent manner. Mg(2+) serves as cofactor. Post-translationally, phosphorylated on Thr-305. Intermolecular autophosphorylation on Thr-305 activates the enzyme.

Its subcellular location is the nucleus. It is found in the cytoplasm. The enzyme catalyses L-seryl-[protein] + ATP = O-phospho-L-seryl-[protein] + ADP + H(+). It carries out the reaction L-threonyl-[protein] + ATP = O-phospho-L-threonyl-[protein] + ADP + H(+). Its activity is regulated as follows. Activated by the non-canonical Wnt signaling pathway, in which WNT5A leads to activation of MAP3K7/TAK1 and HIPK2, which subsequently phosphorylates and activates this protein. Activated by dimerization and subsequent intermolecular autophosphorylation on Thr-305. Other cytokines such as IL6 may also activate this regulatory circuit. Functionally, serine/threonine-protein kinase that regulates a number of transcription factors with key roles in cell fate determination. Positive effector of the non-canonical Wnt signaling pathway, acting downstream of WNT5A, MAP3K7/TAK1 and HIPK2. Negative regulator of the canonical Wnt/beta-catenin signaling pathway. Binds to and phosphorylates TCF7L2/TCF4 and LEF1, promoting the dissociation of the TCF7L2/LEF1/beta-catenin complex from DNA, as well as the ubiquitination and subsequent proteolysis of LEF1. Together these effects inhibit the transcriptional activation of canonical Wnt/beta-catenin target genes. Negative regulator of the Notch signaling pathway. Binds to and phosphorylates NOTCH1, thereby preventing the formation of a transcriptionally active ternary complex of NOTCH1, RBPJ/RBPSUH and MAML1. Negative regulator of the MYB family of transcription factors. Phosphorylation of MYB leads to its subsequent proteolysis while phosphorylation of MYBL1 and MYBL2 inhibits their interaction with the coactivator CREBBP. Other transcription factors may also be inhibited by direct phosphorylation of CREBBP itself. Acts downstream of IL6 and MAP3K7/TAK1 to phosphorylate STAT3, which is in turn required for activation of NLK by MAP3K7/TAK1. Upon IL1B stimulus, cooperates with ATF5 to activate the transactivation activity of C/EBP subfamily members. Phosphorylates ATF5 but also stabilizes ATF5 protein levels in a kinase-independent manner. Acts as an inhibitor of the mTORC1 complex in response to osmotic stress by mediating phosphorylation of RPTOR, thereby preventing recruitment of the mTORC1 complex to lysosomes. The chain is Serine/threonine-protein kinase NLK (NLK) from Bos taurus (Bovine).